A 113-amino-acid polypeptide reads, in one-letter code: Small ribosomal subunit protein mS41 (113 aa).

The N-terminal 22 residues, 1 to 22 (MLILKRIFIIRNFIFPFSNCRY), are a transit peptide targeting the mitochondrion.

The protein belongs to the mitochondrion-specific ribosomal protein mS41 family. Component of the mitochondrial small ribosomal subunit (mt-SSU). Mature yeast 74S mitochondrial ribosomes consist of a small (37S) and a large (54S) subunit. The 37S small subunit contains a 15S ribosomal RNA (15S mt-rRNA) and at least 32 different proteins. The 54S large subunit contains a 21S rRNA (21S mt-rRNA) and at least 45 different proteins.

It is found in the mitochondrion. Its function is as follows. Component of the mitochondrial ribosome (mitoribosome), a dedicated translation machinery responsible for the synthesis of mitochondrial genome-encoded proteins, including at least some of the essential transmembrane subunits of the mitochondrial respiratory chain. The mitoribosomes are attached to the mitochondrial inner membrane and translation products are cotranslationally integrated into the membrane. mS41 is involved in telomere length regulation. This chain is Small ribosomal subunit protein mS41 (fyv4), found in Schizosaccharomyces pombe (strain 972 / ATCC 24843) (Fission yeast).